The following is a 72-amino-acid chain: Translation initiation factor IF-1 (72 aa).

The S1-like domain maps to 2-72; it reads AKEDVIEVEG…TRGRITYRYK (71 aa). Position 60 is a phosphotyrosine (Tyr60).

It belongs to the IF-1 family. In terms of assembly, component of the 30S ribosomal translation pre-initiation complex which assembles on the 30S ribosome in the order IF-2 and IF-3, IF-1 and N-formylmethionyl-tRNA(fMet); mRNA recruitment can occur at any time during PIC assembly.

Its subcellular location is the cytoplasm. One of the essential components for the initiation of protein synthesis. Stabilizes the binding of IF-2 and IF-3 on the 30S subunit to which N-formylmethionyl-tRNA(fMet) subsequently binds. Helps modulate mRNA selection, yielding the 30S pre-initiation complex (PIC). Upon addition of the 50S ribosomal subunit IF-1, IF-2 and IF-3 are released leaving the mature 70S translation initiation complex. This Halalkalibacterium halodurans (strain ATCC BAA-125 / DSM 18197 / FERM 7344 / JCM 9153 / C-125) (Bacillus halodurans) protein is Translation initiation factor IF-1.